We begin with the raw amino-acid sequence, 2682 residues long: 3-methylorcinaldehyde synthase (2682 aa).

Positions 111-272 (LIPLVVIEQL…TEITLYGAFH (162 aa)) are N-terminal acylcarrier protein transacylase domain (SAT). The active-site Nucleophile; for transacylase activity is cysteine 154. Histidine 272 functions as the Proton donor/acceptor; for transacylase activity in the catalytic mechanism. The region spanning 401-826 (ESDIAVIGMA…GSNASMIVMQ (426 aa)) is the Ketosynthase family 3 (KS3) domain. Catalysis depends on for beta-ketoacyl synthase activity residues cysteine 573, histidine 708, and histidine 749. The segment at 947–1237 (FGGQVSTHIG…ITAMTSRALD (291 aa)) is malonyl-CoA:ACP transacylase (MAT) domain. The tract at residues 1339 to 1468 (LTFVGFQDSS…GKIKFTNARD (130 aa)) is N-terminal hotdog fold. Positions 1339–1651 (LTFVGFQDSS…YVKIPKLSMQ (313 aa)) constitute a PKS/mFAS DH domain. The segment at 1367–1649 (LLLGHMTIQT…IAYVKIPKLS (283 aa)) is product template (PT) domain. Histidine 1371 (proton acceptor; for dehydratase activity) is an active-site residue. Residues 1496–1651 (VDEVLANRSI…YVKIPKLSMQ (156 aa)) form a C-terminal hotdog fold region. Aspartate 1555 serves as the catalytic Proton donor; for dehydratase activity. Residues 1723–1797 (ENITERVKAV…DLMKVVTGVV (75 aa)) form the Carrier domain. Serine 1757 is modified (O-(pantetheine 4'-phosphoryl)serine). The interval 2021–2211 (EWPLNQVMYT…AGYGHVYWTE (191 aa)) is methyltransferase domain. The tract at residues 2303–2548 (VTGATGGLGA…LGWTPADAIA (246 aa)) is NADPH-binding (R) domain.

It functions in the pathway secondary metabolite biosynthesis; terpenoid biosynthesis. Non-reducing polyketide synthase; part of the gene cluster that mediates the biosynthesis of eupenifeldin, a bistropolone meroterpenoid that acts as an antitumor agent. The first step of eupenifeldin biosynthesis is the biosynthesis of 3-methylorcinaldehyde performed by the non-reducing polyketide synthase eupA. Oxidative dearomatization of 3-methylorcinaldehyde likely catalyzed by the FAD-dependent monooxygenase eupB is followed by oxidative ring expansion by the 2-oxoglutarate-dependent dioxygenase eupC to provide the first tropolone metabolite, tropolone stipitaldehyde. In parallel, generation of sesquiterpene alpha-humulene from farnesylpyrophosphate (FPP) is catalyzed by the terpene cyclase eupE. The cytochrome P450 monooxygenase eupD then hydroxylates humulene to humulenol. The putative Diels-Alderase eupF probably catalyzes the formation of the tropolone-humulene skeleton by linking humulenol and the polyketide moiety. The short-chain dehydrogenase/reductase eupG and the flavin-dependent monooxygenase eupH are also essential for eupenifeldin biosynthesis and are likely the additional decorating enzymes of the tropolone-humulene skeleton to produce final eupenifeldin or derivatives. The protein is 3-methylorcinaldehyde synthase of Phoma sp.